Consider the following 395-residue polypeptide: Vascular endothelial growth factor A, long form (395 aa).

2 disordered regions span residues 1–45 and 73–175; these read MTDR…VEGV and EAEP…AGPG. Residues 73 to 85 show a composition bias toward low complexity; it reads EAEPSGAARSASS. Positions 91–102 are enriched in acidic residues; that stretch reads QPEEGEEEEEKE. 2 stretches are compositionally biased toward low complexity: residues 123–143 and 165–175; these read AAVC…ARAS and RRGSASRAGPG. Disulfide bonds link Cys232–Cys274, Cys263–Cys308, and Cys267–Cys310. Residue Asn281 is glycosylated (N-linked (GlcNAc...) asparagine). Basic and acidic residues predominate over residues 314–323; the sequence is KDRARQEKKS. The tract at residues 314–344 is disordered; it reads KDRARQEKKSVRGKGKGQKRKRKKSRYKSWS. Basic residues predominate over residues 324–340; sequence VRGKGKGQKRKRKKSRY.

Belongs to the PDGF/VEGF growth factor family. Homodimer; disulfide-linked. Also found as heterodimer with PGF. Interacts with NRP1. Interacts with isoform 2 of BSG. Interacts with CD82; this interaction inhibits VEGFA-mediated signaling pathway. Produced by use of an alternative upstream CUG codon and post-translationally processed into the N-terminal N-VEGF form and the C-terminal secreted VEGFA form. Higher expression in pituitary tumors than the pituitary gland. As to expression, widely expressed. In terms of tissue distribution, not widely expressed.

It is found in the cytoplasm. The protein localises to the nucleus. It localises to the secreted. Its subcellular location is the endoplasmic reticulum. The protein resides in the golgi apparatus. It is found in the extracellular space. The protein localises to the extracellular matrix. Functionally, participates in the induction of key genes involved in the response to hypoxia and in the induction of angiogenesis such as HIF1A. Involved in protecting cells from hypoxia-mediated cell death. Growth factor active in angiogenesis, vasculogenesis and endothelial cell growth. Induces endothelial cell proliferation, promotes cell migration, inhibits apoptosis and induces permeabilization of blood vessels. Binds to the FLT1/VEGFR1 and KDR/VEGFR2 receptors, heparan sulfate and heparin. Binds to the NRP1/neuropilin-1 receptor. Binding to NRP1 initiates a signaling pathway needed for motor neuron axon guidance and cell body migration, including for the caudal migration of facial motor neurons from rhombomere 4 to rhombomere 6 during embryonic development. Also binds the DEAR/FBXW7-AS1 receptor. Its function is as follows. Binds to the KDR receptor but does not activate downstream signaling pathways, does not activate angiogenesis and inhibits tumor growth. In Homo sapiens (Human), this protein is Vascular endothelial growth factor A, long form (VEGFA).